Consider the following 528-residue polypeptide: Protein spinster homolog 1 (528 aa).

The disordered stretch occupies residues 1–38 (MAGSDTAPFLSQADDPDDGPAPGHPGLPGPMGNPKSGE). Residue Ala2 is modified to N-acetylalanine. Transmembrane regions (helical) follow at residues 60 to 80 (LIVV…FTVA), 98 to 118 (GLIQ…FGYL), 126 to 146 (YLMC…SFIP), 160 to 180 (VGVG…DLFV), 187 to 207 (MLSI…IAGS), 218 to 238 (WALR…FLVV), 278 to 298 (LGFT…PAFL), 323 to 343 (LIFG…GVEI), 357 to 377 (LVCA…LACA), 381 to 401 (IVAT…NWAI), 421 to 441 (FQIV…IGLI), and 465 to 485 (MLCA…AMFI). The residue at position 518 (Ser518) is a Phosphoserine.

Belongs to the major facilitator superfamily. Spinster (TC 2.A.1.49) family. Interacts with BCL2 and BCL2L1.

Its subcellular location is the lysosome membrane. The enzyme catalyses a 1-acyl-sn-glycero-3-phosphocholine(out) + H(+)(out) = a 1-acyl-sn-glycero-3-phosphocholine(in) + H(+)(in). The catalysed reaction is 1-hexadecanoyl-sn-glycero-3-phosphocholine(out) + H(+)(out) = 1-hexadecanoyl-sn-glycero-3-phosphocholine(in) + H(+)(in). It carries out the reaction 1-(9Z-octadecenoyl)-sn-glycero-3-phosphocholine(out) + H(+)(out) = 1-(9Z-octadecenoyl)-sn-glycero-3-phosphocholine(in) + H(+)(in). It catalyses the reaction 1-(5Z,8Z,11Z,14Z-eicosatetraenoyl)-sn-glycero-3-phosphocholine(out) + H(+)(out) = 1-(5Z,8Z,11Z,14Z-eicosatetraenoyl)-sn-glycero-3-phosphocholine(in) + H(+)(in). The enzyme catalyses 1-(4Z,7Z,10Z,13Z,16Z,19Z-docosahexaenoyl)-sn-glycero-3-phosphocholine(out) + H(+)(out) = 1-(4Z,7Z,10Z,13Z,16Z,19Z-docosahexaenoyl)-sn-glycero-3-phosphocholine(in) + H(+)(in). The catalysed reaction is a 1-acyl-sn-glycero-3-phosphoethanolamine(out) + H(+)(out) = a 1-acyl-sn-glycero-3-phosphoethanolamine(in) + H(+)(in). It carries out the reaction 1-(9Z-octadecenoyl)-sn-glycero-3-phosphoethanolamine(out) + H(+)(out) = 1-(9Z-octadecenoyl)-sn-glycero-3-phosphoethanolamine(in) + H(+)(in). It catalyses the reaction 1-acyl-sn-glycero-3-phospho-(1'-sn-glycerol)(out) + H(+)(out) = 1-acyl-sn-glycero-3-phospho-(1'-sn-glycerol)(in) + H(+)(in). The enzyme catalyses 1-(9Z-octadecenoyl)-sn-glycero-3-phospho-(1'-sn-glycerol)(out) + H(+)(out) = 1-(9Z-octadecenoyl)-sn-glycero-3-phospho-(1'-sn-glycerol)(in) + H(+)(in). The catalysed reaction is a 1-O-(1Z-alkenyl)-sn-glycero-3-phosphocholine(out) + H(+)(out) = a 1-O-(1Z-alkenyl)-sn-glycero-3-phosphocholine(in) + H(+)(in). It carries out the reaction 1-(1Z-hexadecenyl)-sn-glycero-3-phosphocholine(out) + H(+)(out) = 1-(1Z-hexadecenyl)-sn-glycero-3-phosphocholine(in) + H(+)(in). It catalyses the reaction a 1-O-(1Z-alkenyl)-sn-glycero-3-phosphoethanolamine(out) + H(+)(out) = a 1-O-(1Z-alkenyl)-sn-glycero-3-phosphoethanolamine(in) + H(+)(in). The enzyme catalyses 1-O-(1Z-hexadecenyl)-sn-glycero-3-phosphoethanolamine(out) + H(+)(out) = 1-O-(1Z-hexadecenyl)-sn-glycero-3-phosphoethanolamine(in) + H(+)(in). Plays a critical role in the phospholipid salvage pathway from lysosomes to the cytosol. Mediates the rate-limiting, proton-dependent, lysosomal efflux of lysophospholipids, which can then be reacylated by acyltransferases in the endoplasmic reticulum to form phospholipids. Selective for zwitterionic headgroups such as lysophosphatidylcholine (LPC) and lysophosphatidylethanolamine (LPE), can also transport lysophosphatidylglycerol (LPG), but not other anionic lysophospholipids, sphingosine, nor sphingomyelin. Transports lysophospholipids with saturated, monounsaturated, and polyunsaturated fatty acids, such as 1-hexadecanoyl-sn-glycero-3-phosphocholine, 1-(9Z-octadecenoyl)-sn-glycero-3-phosphocholine and 1-(4Z,7Z,10Z,13Z,16Z,19Z-docosahexaenoyl)-sn-glycero-3-phosphocholine, respectively. Can also transport lysoplasmalogen (LPC with a fatty alcohol) such as 1-(1Z-hexadecenyl)-sn-glycero-3-phosphocholine. Essential player in lysosomal homeostasis. Crucial for cell survival under conditions of nutrient limitation. May be involved in necrotic or autophagic cell death. This is Protein spinster homolog 1 (Spns1) from Rattus norvegicus (Rat).